Here is a 482-residue protein sequence, read N- to C-terminus: GTPase Der (482 aa).

EngA-type G domains follow at residues P3–F166 and I195–T368. Residues G9–S16, D56–I60, N118–D121, G201–S208, D248–V252, and N313–D316 contribute to the GTP site. Residues K369–A453 enclose the KH-like domain.

The protein belongs to the TRAFAC class TrmE-Era-EngA-EngB-Septin-like GTPase superfamily. EngA (Der) GTPase family. In terms of assembly, associates with the 50S ribosomal subunit.

In terms of biological role, GTPase that plays an essential role in the late steps of ribosome biogenesis. In Pseudoalteromonas atlantica (strain T6c / ATCC BAA-1087), this protein is GTPase Der.